We begin with the raw amino-acid sequence, 290 residues long: Ribosomal protein L11 methyltransferase (290 aa).

4 residues coordinate S-adenosyl-L-methionine: Thr-135, Gly-158, Asp-180, and Asn-227.

This sequence belongs to the methyltransferase superfamily. PrmA family.

It is found in the cytoplasm. The catalysed reaction is L-lysyl-[protein] + 3 S-adenosyl-L-methionine = N(6),N(6),N(6)-trimethyl-L-lysyl-[protein] + 3 S-adenosyl-L-homocysteine + 3 H(+). Functionally, methylates ribosomal protein L11. This is Ribosomal protein L11 methyltransferase from Mesorhizobium japonicum (strain LMG 29417 / CECT 9101 / MAFF 303099) (Mesorhizobium loti (strain MAFF 303099)).